The primary structure comprises 97 residues: Protein RnfH (97 aa).

The protein belongs to the UPF0125 (RnfH) family.

The polypeptide is Protein RnfH (Aliivibrio salmonicida (strain LFI1238) (Vibrio salmonicida (strain LFI1238))).